Reading from the N-terminus, the 5100-residue chain is Hemicentin-2 (5100 aa).

Residues 1–19 form the signal peptide; sequence MTPGAQLLPLLVAISTAVA. Residues 37–211 enclose the VWFA domain; the sequence is DATLAFVFDV…QVSEVLKWVE (175 aa). Asn-330, Asn-347, Asn-380, Asn-479, Asn-526, Asn-548, and Asn-675 each carry an N-linked (GlcNAc...) asparagine glycan. Ig-like C2-type domains lie at 426-515, 517-601, 609-692, 699-782, 787-877, 882-968, 973-1058, 1063-1156, 1161-1239, 1246-1335, 1340-1437, 1442-1531, 1536-1624, 1629-1717, 1722-1810, 1825-1913, 1920-2008, 2011-2100, 2105-2189, 2196-2285, 2290-2379, 2384-2473, 2478-2566, 2571-2662, 2667-2758, 2781-2871, 2875-2964, 2971-3058, 3063-3153, 3157-3245, 3250-3340, 3345-3432, 3438-3523, 3528-3609, 3614-3702, 3707-3793, 3798-3886, 3891-3977, 3982-4067, 4071-4158, 4163-4244, 4252-4336, and 4343-4428; these read PGVP…IVIT, PPPQ…RATT, PQVS…ETVT, PSVS…IQLV, PRLT…LVVT, PQIA…VELV, PRIH…MWLS, PMIK…YVLR, PQVQ…WKLE, PHWG…AKLV, PSIR…FNLA, PSLL…FQLS, PTIW…TSLE, PTIE…YSVE, PQLL…VEVS, SAHH…KDVT, PNIE…LRVN, PRIT…VILQ, PSIL…KHFN, PAFP…QSLE, PQVT…FALS, PHLT…FSVE, PSIE…TQLS, PTIL…YHVE, PSIS…QDFN, PHEE…YELL, PPVI…KLFT, PQIS…VQLN, PSFK…FVLA, PPTF…FVVS, PQIQ…HTVN, PTIK…RNFT, PPIL…FQLT, PHIE…FRVR, PNVV…FRVE, PTIQ…LDLR, PAIA…YQVT, PTIA…MVLT, PVVK…TRLV, PPVI…VHLT, PVLT…QAVS, PVLQ…KVVT, and PVFQ…ALLA. Cys-449 and Cys-497 are joined by a disulfide. Disulfide bonds link Cys-539–Cys-588, Cys-630–Cys-678, Cys-720–Cys-766, Cys-808–Cys-859, Cys-903–Cys-952, and Cys-994–Cys-1042. Omega-N-methylarginine occurs at positions 909, 914, and 915. N-linked (GlcNAc...) asparagine glycans are attached at residues Asn-1024 and Asn-1068. 2 cysteine pairs are disulfide-bonded: Cys-1091–Cys-1140 and Cys-1182–Cys-1225. Asn-1264 carries an N-linked (GlcNAc...) asparagine glycan. A disordered region spans residues 1265 to 1293; that stretch reads ASLPCPAQGTPKPRITWRRGPSSEPLNGR. The cysteines at positions 1269 and 1319 are disulfide-linked. Asn-1350 carries an N-linked (GlcNAc...) asparagine glycan. Intrachain disulfides connect Cys-1363–Cys-1421 and Cys-1465–Cys-1515. N-linked (GlcNAc...) asparagine glycosylation is present at Asn-1542. 4 disulfides stabilise this stretch: Cys-1559-Cys-1608, Cys-1653-Cys-1701, Cys-1745-Cys-1794, and Cys-1846-Cys-1899. N-linked (GlcNAc...) asparagine glycans are attached at residues Asn-1676 and Asn-1787. An N-linked (GlcNAc...) asparagine glycan is attached at Asn-1934. 2 disulfides stabilise this stretch: Cys-1941/Cys-1990 and Cys-2033/Cys-2084. Residues Asn-2034, Asn-2113, and Asn-2119 are each glycosylated (N-linked (GlcNAc...) asparagine). 2 disulfides stabilise this stretch: Cys-2126-Cys-2175 and Cys-2218-Cys-2269. Asn-2309, Asn-2315, Asn-2345, and Asn-2395 each carry an N-linked (GlcNAc...) asparagine glycan. A disulfide bond links Cys-2314 and Cys-2363. Cys-2408 and Cys-2457 are disulfide-bonded. N-linked (GlcNAc...) asparagine glycosylation is found at Asn-2469, Asn-2502, Asn-2541, Asn-2606, and Asn-2688. Intrachain disulfides connect Cys-2501–Cys-2550 and Cys-2597–Cys-2646. 2 disulfides stabilise this stretch: Cys-2695-Cys-2744 and Cys-2806-Cys-2855. Asn-2892 is a glycosylation site (N-linked (GlcNAc...) asparagine). A disulfide bond links Cys-2901 and Cys-2950. An N-linked (GlcNAc...) asparagine glycan is attached at Asn-2986. Intrachain disulfides connect Cys-2993-Cys-3042, Cys-3088-Cys-3137, Cys-3180-Cys-3229, Cys-3273-Cys-3324, and Cys-3369-Cys-3418. Asn-3430 is a glycosylation site (N-linked (GlcNAc...) asparagine). 3 disulfides stabilise this stretch: Cys-3462–Cys-3507, Cys-3551–Cys-3593, and Cys-3637–Cys-3686. N-linked (GlcNAc...) asparagine glycosylation is found at Asn-3560 and Asn-3575. Residues Asn-3717 and Asn-3721 are each glycosylated (N-linked (GlcNAc...) asparagine). Cys-3728 and Cys-3777 are joined by a disulfide. Residue Asn-3806 is glycosylated (N-linked (GlcNAc...) asparagine). 7 cysteine pairs are disulfide-bonded: Cys-3819–Cys-3870, Cys-3912–Cys-3961, Cys-4003–Cys-4051, Cys-4093–Cys-4142, Cys-4184–Cys-4231, Cys-4274–Cys-4322, and Cys-4364–Cys-4412. A glycan (N-linked (GlcNAc...) asparagine) is linked at Asn-4304. A Nidogen G2 beta-barrel domain is found at 4432–4654; sequence EPRGSRGSMT…QTEENEVGCP (223 aa). 2 N-linked (GlcNAc...) asparagine glycosylation sites follow: Asn-4455 and Asn-4601. The 41-residue stretch at 4668 to 4708 folds into the EGF-like 1; calcium-binding domain; that stretch reads DKDECSGGPSPCSHTCRNAPGHFSCSCPTGFSLAWDHRNCR. 11 disulfide bridges follow: Cys-4672/Cys-4683, Cys-4679/Cys-4692, Cys-4694/Cys-4707, Cys-4713/Cys-4726, Cys-4720/Cys-4735, Cys-4739/Cys-4752, Cys-4758/Cys-4771, Cys-4765/Cys-4780, Cys-4801/Cys-4812, Cys-4808/Cys-4821, and Cys-4823/Cys-4836. An EGF-like 2; calcium-binding domain is found at 4709–4753; it reads DVDECAGNTHLCQEEQRCVNLLGSYNCLASCRPGFRVTADGSNCE. Residues 4754-4789 form the EGF-like 3; calcium-binding domain; the sequence is DVDECLEQLDECHYNQLCENTPGGHHCGCPRGYRQQ. The region spanning 4797–4837 is the EGF-like 4; calcium-binding domain; the sequence is DINECLQLPTPCVYQCQNLQGSYRCLCPPGQTLLRDGRTCI. Asn-4845 carries an N-linked (GlcNAc...) asparagine glycan. The 40-residue stretch at 4904–4943 folds into the EGF-like 5; calcium-binding domain; it reads DLDECRVRSLCQHACQNTEGSYYCLCPSGYRLLPSGKNCQ. Cystine bridges form between Cys-4908-Cys-4918, Cys-4914-Cys-4927, and Cys-4929-Cys-4942. Asn-5035 carries N-linked (GlcNAc...) asparagine glycosylation.

In terms of processing, reported to be phosphorylated; however as this position is extracellular, the in vivo relevance is unsure. As to expression, in neonatal skin, localized in the pericellular space of basal epidermal keratinocytes (at protein level). In adult skin, restricted to basal keratinocytes of hair follicles and the interfollicular epidermis. Absent from the myotendinous junction but present in skeletal muscle (at protein level). Expressed in the pericellular extracellular matrix of epithelial cells in a number of tissues including embryonic trophectoderm and adult skin and tongue. Also present in the extracellular matrix of some, but not all, blood vessels. Expressed primarily in epithelial cells in the embryonic epidermis, lung, intestine, skeletal hindlimb muscle, tongue and the muscular layers of the esophagus.

The protein resides in the secreted. It localises to the extracellular space. The protein localises to the extracellular matrix. It is found in the cleavage furrow. The chain is Hemicentin-2 (Hmcn2) from Mus musculus (Mouse).